A 279-amino-acid polypeptide reads, in one-letter code: Prephenate dehydratase (279 aa).

One can recognise a Prephenate dehydratase domain in the interval 2-178 (KIAYLGPRGS…NSTRFWLLGK (177 aa)). An ACT domain is found at 194-272 (LALTLPDNLP…VNVRLLGNYS (79 aa)).

It carries out the reaction prephenate + H(+) = 3-phenylpyruvate + CO2 + H2O. It functions in the pathway amino-acid biosynthesis; L-phenylalanine biosynthesis; phenylpyruvate from prephenate: step 1/1. The polypeptide is Prephenate dehydratase (pheA) (Lactococcus lactis subsp. cremoris (strain MG1363)).